Reading from the N-terminus, the 583-residue chain is Protein translocase subunit SecD (583 aa).

The next 6 helical transmembrane spans lie at 7 to 27 (FGVV…TLQW), 419 to 439 (LVWG…EAGV), 446 to 468 (LLNL…LSSI), 469 to 489 (AGMI…FERI), 511 to 531 (FWAI…LSVL), and 538 to 558 (GFAY…LFVS).

This sequence belongs to the SecD/SecF family. SecD subfamily. In terms of assembly, forms a complex with SecF. Part of the essential Sec protein translocation apparatus which comprises SecA, SecYEG and auxiliary proteins SecDF. Other proteins may also be involved.

It is found in the cell inner membrane. In terms of biological role, part of the Sec protein translocase complex. Interacts with the SecYEG preprotein conducting channel. SecDF uses the proton motive force (PMF) to complete protein translocation after the ATP-dependent function of SecA. The chain is Protein translocase subunit SecD from Treponema pallidum (strain Nichols).